The following is a 406-amino-acid chain: L-cysteine:1D-myo-inositol 2-amino-2-deoxy-alpha-D-glucopyranoside ligase (406 aa).

A Zn(2+)-binding site is contributed by Cys45. L-cysteinyl-5'-AMP is bound by residues 45–48 (CGIT), Thr60, and 83–85 (NIT). A 'HIGH' region motif is present at residues 47-57 (ITPYDATHMGH). The 'ERGGDP' region motif lies at 185–190 (ERGGDP). Trp225 contacts L-cysteinyl-5'-AMP. Cys229 contributes to the Zn(2+) binding site. 247-249 (GSD) contacts L-cysteinyl-5'-AMP. His254 provides a ligand contact to Zn(2+). Val281 serves as a coordination point for L-cysteinyl-5'-AMP. The 'KMSKS' region motif lies at 287–291 (KMSKS).

Belongs to the class-I aminoacyl-tRNA synthetase family. MshC subfamily. Monomer. It depends on Zn(2+) as a cofactor.

It catalyses the reaction 1D-myo-inositol 2-amino-2-deoxy-alpha-D-glucopyranoside + L-cysteine + ATP = 1D-myo-inositol 2-(L-cysteinylamino)-2-deoxy-alpha-D-glucopyranoside + AMP + diphosphate + H(+). In terms of biological role, catalyzes the ATP-dependent condensation of GlcN-Ins and L-cysteine to form L-Cys-GlcN-Ins. In Kribbella flavida (strain DSM 17836 / JCM 10339 / NBRC 14399), this protein is L-cysteine:1D-myo-inositol 2-amino-2-deoxy-alpha-D-glucopyranoside ligase.